A 195-amino-acid chain; its full sequence is Glucagon family neuropeptides (195 aa).

A signal peptide spans 1 to 20; the sequence is MAKSSRATLALLIYGILMRY. The propeptide occupies 21-82; the sequence is SQCTPIGMGF…YYPPERRAET (62 aa). The segment at 113–132 is disordered; the sequence is VGEEEEDEEDSEPLSKRHSD. Over residues 115–124 the composition is skewed to acidic residues; it reads EEEEDEEDSE. Position 167 is a lysine amide (Lys167). The propeptide occupies 171 to 195; that stretch reads LVVPSVWTGIRDTVIITPEKRGKRY.

This sequence belongs to the glucagon family. As to expression, brain, testis, ovary and stomach. Not pancreas, pituitary, muscle and liver.

The protein localises to the secreted. Functionally, primary role of GHRH is to release GH from the pituitary. PACAP plays pivotal roles as a neurotransmitter and/or a neuromodulator. This is Glucagon family neuropeptides from Clarias macrocephalus (Bighead catfish).